We begin with the raw amino-acid sequence, 252 residues long: 5'-nucleotidase SurE (252 aa).

Residues aspartate 8, aspartate 9, serine 39, and asparagine 95 each coordinate a divalent metal cation.

This sequence belongs to the SurE nucleotidase family. A divalent metal cation serves as cofactor.

It is found in the cytoplasm. It catalyses the reaction a ribonucleoside 5'-phosphate + H2O = a ribonucleoside + phosphate. In terms of biological role, nucleotidase that shows phosphatase activity on nucleoside 5'-monophosphates. The polypeptide is 5'-nucleotidase SurE (Clostridium botulinum (strain Kyoto / Type A2)).